Reading from the N-terminus, the 398-residue chain is GTPase Obg (398 aa).

In terms of domain architecture, Obg spans 1–159; sequence MKFVDEAPIS…RNLKLELKVL (159 aa). The interval 128–148 is disordered; sequence TRFKSSTNRVPRKTTPGTEGE. The OBG-type G domain maps to 160–333; sequence ADVGMLGLPN…LSGKIMDHLE (174 aa). GTP is bound by residues 166-173, 191-195, 213-216, 283-286, and 314-316; these read GLPNAGKS, FTTLV, DIPG, NKID, and SAL. Positions 173 and 193 each coordinate Mg(2+).

The protein belongs to the TRAFAC class OBG-HflX-like GTPase superfamily. OBG GTPase family. In terms of assembly, monomer. Mg(2+) is required as a cofactor.

The protein localises to the cytoplasm. In terms of biological role, an essential GTPase which binds GTP, GDP and possibly (p)ppGpp with moderate affinity, with high nucleotide exchange rates and a fairly low GTP hydrolysis rate. Plays a role in control of the cell cycle, stress response, ribosome biogenesis and in those bacteria that undergo differentiation, in morphogenesis control. The sequence is that of GTPase Obg from Cellvibrio japonicus (strain Ueda107) (Pseudomonas fluorescens subsp. cellulosa).